The primary structure comprises 206 residues: Ribosomal RNA small subunit methyltransferase G (206 aa).

Residues G74, L79, 125 to 126 (VE), and R140 contribute to the S-adenosyl-L-methionine site.

Belongs to the methyltransferase superfamily. RNA methyltransferase RsmG family.

Its subcellular location is the cytoplasm. The enzyme catalyses guanosine(527) in 16S rRNA + S-adenosyl-L-methionine = N(7)-methylguanosine(527) in 16S rRNA + S-adenosyl-L-homocysteine. Functionally, specifically methylates the N7 position of guanine in position 527 of 16S rRNA. The sequence is that of Ribosomal RNA small subunit methyltransferase G from Shewanella sp. (strain MR-7).